The chain runs to 162 residues: MDIKEIKVGIADLNVGKNPDKIITVGLGSCIGIALYDGIKCIGGLSHIMLPDSTQFSKVTNPMKFADLAIPILVEKMEKLGARKNGLKAKICGGASMFNFSDKSMVMDIGNRNGKAVKEKLKELSIPLLAEDIGGNKGRTMIFDTSTGKVYIKTVGLGTKEI.

Belongs to the CheD family.

It carries out the reaction L-glutaminyl-[protein] + H2O = L-glutamyl-[protein] + NH4(+). Probably deamidates glutamine residues to glutamate on methyl-accepting chemotaxis receptors (MCPs), playing an important role in chemotaxis. The protein is Probable chemoreceptor glutamine deamidase CheD of Clostridium botulinum (strain ATCC 19397 / Type A).